The primary structure comprises 178 residues: GTP-dependent dephospho-CoA kinase (178 aa).

Residues Asp-48, Ile-49, Asp-67, Lys-69, and Glu-126 each coordinate GTP.

The protein belongs to the GTP-dependent DPCK family.

It carries out the reaction 3'-dephospho-CoA + GTP = GDP + CoA + H(+). The protein operates within cofactor biosynthesis; coenzyme A biosynthesis. In terms of biological role, catalyzes the GTP-dependent phosphorylation of the 3'-hydroxyl group of dephosphocoenzyme A to form coenzyme A (CoA). In Methanothrix thermoacetophila (strain DSM 6194 / JCM 14653 / NBRC 101360 / PT) (Methanosaeta thermophila), this protein is GTP-dependent dephospho-CoA kinase.